The primary structure comprises 202 residues: MSCSRPCVCSHGTSVEESTWYGFDFYPNLFYNDWLGTTTLPYNPERIPIRYINRPWPSLCWKVTVAVASLFLLLGVAALTTGYAVPPKLELVNESKFSSMEDPVADYNQALMTCRVVGATLCGVAGIMLAVCLFLIASGWMFQDIKAEPLVTETDSPVEVFRDEPEKLSPAFHETSSQSPFLTPPSPFGQQSVQTSQPQRDL.

Transmembrane regions (helical) follow at residues 65 to 85 (VAVA…GYAV) and 116 to 136 (VVGA…LFLI). The interval 162-202 (RDEPEKLSPAFHETSSQSPFLTPPSPFGQQSVQTSQPQRDL) is disordered. A compositionally biased stretch (polar residues) spans 188-202 (FGQQSVQTSQPQRDL).

Belongs to the VMP family. In terms of tissue distribution, expressed specifically in brain where it is widely expressed, with highest levels of expression in thalamus and hypothalamus. In brain, found in neural cell bodies and detected in many regions of the limbic system, such as the septum nucleus, horizontal and vertical limbs of the diagonal band, hippocampus, amygdaloid nucleus, and habernula nucleus. Also localizes to small vesicles found in the perinuclear region of Neuro2a and PC12 cells.

Its subcellular location is the membrane. Its function is as follows. May play a role in maintenance and/or transport of vesicles. This is Neurensin-2 from Mus musculus (Mouse).